The sequence spans 799 residues: Cadherin-8 (799 aa).

The N-terminal stretch at 1 to 29 (MPERLAETLLDLWTPLIILWITLPSFVYM) is a signal peptide. Residues 30-61 (APMNQAHVLTTGSPLELSRQSEEMRILNRSKR) constitute a propeptide that is removed on maturation. Cadherin domains follow at residues 62–167 (GWVW…APEF), 168–276 (LNGP…PPKF), 277–391 (AQSL…PPVF), 392–494 (SSPT…DNAP), and 495–616 (EFAS…YVLP). The Extracellular portion of the chain corresponds to 62–621 (GWVWNQMFVL…PYVLPIGLSM (560 aa)). N-linked (GlcNAc...) asparagine glycosylation occurs at N188. N-linked (GlcNAc...) asparagine glycosylation is found at N463, N473, and N544. Residues 622-642 (GALIAILACIILLLVIVVLFV) form a helical membrane-spanning segment. Over 643 to 799 (TLRRHKNEPL…YSVGESDKET (157 aa)) the chain is Cytoplasmic. The residue at position 795 (S795) is a Phosphoserine.

The protein localises to the cell membrane. Its function is as follows. Cadherins are calcium-dependent cell adhesion proteins. They preferentially interact with themselves in a homophilic manner in connecting cells; cadherins may thus contribute to the sorting of heterogeneous cell types. The polypeptide is Cadherin-8 (Cdh8) (Rattus norvegicus (Rat)).